A 976-amino-acid polypeptide reads, in one-letter code: Mast/stem cell growth factor receptor kita (976 aa).

The signal sequence occupies residues 1–21; sequence MEYHCVLFTVLLQLIIQPGRS. Topologically, residues 22-515 are extracellular; it reads RPTITPEGPR…NTVPHELFTP (494 aa). Ig-like C2-type domains lie at 23 to 105, 100 to 199, 206 to 301, 308 to 402, and 399 to 504; these read PTIT…VYVK, IYVY…LTVR, PPIT…VWVN, INIT…FEVH, and FEVH…FSIS. Asn-39 and Asn-47 each carry an N-linked (GlcNAc...) asparagine glycan. Intrachain disulfides connect Cys-44-Cys-89, Cys-131-Cys-180, Cys-146-Cys-177, and Cys-228-Cys-285. Residues Asn-282, Asn-309, Asn-315, Asn-352, Asn-449, and Asn-477 are each glycosylated (N-linked (GlcNAc...) asparagine). A disulfide bridge links Cys-422 with Cys-488. A helical membrane pass occupies residues 516–536; sequence LLIGFVAAAVILVLILIVLTY. Over 537-976 the chain is Cytoplasmic; sequence KYMQKPKYQI…DRSSPSHPVV (440 aa). Tyr-559 contributes to the Mg(2+) binding site. A phosphotyrosine; by autocatalysis mark is found at Tyr-559 and Tyr-561. The Protein kinase domain occupies 580 to 922; it reads LRFGKTLGSG…ISDSTKHIYL (343 aa). ATP is bound by residues 587-594, Lys-614, and 662-668; these read GSGAFGKV and EYCCFGD. Phosphotyrosine; by autocatalysis is present on residues Tyr-691 and Tyr-707. Asp-777 acts as the Proton acceptor in catalysis. Arg-781 lines the ATP pocket. Mg(2+) is bound by residues Asn-782 and Asp-795. Phosphotyrosine; by autocatalysis occurs at positions 808 and 921. Positions 929 to 976 are disordered; it reads PAAPGPREESSSHVHRLNSVGSHSTATQPLLSSNDVFLDRSSPSHPVV. Over residues 947-976 the composition is skewed to polar residues; it reads SVGSHSTATQPLLSSNDVFLDRSSPSHPVV.

Belongs to the protein kinase superfamily. Tyr protein kinase family. CSF-1/PDGF receptor subfamily. Post-translationally, ubiquitinated. Rapidly ubiquitinated after autophosphorylation induced by kitlg/scf binding, leading to internalization and degradation. Autophosphorylated on tyrosine residues. Phosphorylated tyrosine residues are important for interaction with specific binding partners. Expressed in cells of the neural crest-melanocyte lineage. In the embryo, also expressed in mesodermal cells that give rise to hematopoietic precursors, notochord, neural crest-derived cells of the branchial arches, pineal gland, retina and mechanoreceptive sensory cells of lateral line neuromasts. Not detected in primordial germ cells or larval gut.

It localises to the cell membrane. The catalysed reaction is L-tyrosyl-[protein] + ATP = O-phospho-L-tyrosyl-[protein] + ADP + H(+). Its function is as follows. Tyrosine-protein kinase that acts as a cell-surface receptor for the cytokine kitlg/scf and plays a role in the regulation of cell survival and proliferation, hematopoiesis, stem cell maintenance, gametogenesis, and in mast cell development, migration and function. Required for the migration of cells in the melanocyte lineage and the survival of embryonic melanocytes. Required for the differentiation of some, but not all, melanocytes. Not essential for hematopoiesis or primordial germ cell development. This chain is Mast/stem cell growth factor receptor kita (kita), found in Danio rerio (Zebrafish).